A 110-amino-acid chain; its full sequence is Phosphoribosyl-ATP pyrophosphatase (110 aa).

It belongs to the PRA-PH family.

Its subcellular location is the cytoplasm. It carries out the reaction 1-(5-phospho-beta-D-ribosyl)-ATP + H2O = 1-(5-phospho-beta-D-ribosyl)-5'-AMP + diphosphate + H(+). It functions in the pathway amino-acid biosynthesis; L-histidine biosynthesis; L-histidine from 5-phospho-alpha-D-ribose 1-diphosphate: step 2/9. The chain is Phosphoribosyl-ATP pyrophosphatase from Clostridium botulinum (strain ATCC 19397 / Type A).